We begin with the raw amino-acid sequence, 392 residues long: Phosphoglycerate kinase (392 aa).

Substrate-binding positions include D21–N23, R36, H59–R62, R113, and R146. Residues K197, E319, and G345 to T348 each bind ATP.

The protein belongs to the phosphoglycerate kinase family. In terms of assembly, monomer.

The protein localises to the cytoplasm. The catalysed reaction is (2R)-3-phosphoglycerate + ATP = (2R)-3-phospho-glyceroyl phosphate + ADP. Its pathway is carbohydrate degradation; glycolysis; pyruvate from D-glyceraldehyde 3-phosphate: step 2/5. This Alkalilimnicola ehrlichii (strain ATCC BAA-1101 / DSM 17681 / MLHE-1) protein is Phosphoglycerate kinase.